The primary structure comprises 232 residues: MTATKMNAQEIIQFIANAEKKTSVKVTFEGQLATSVPSSVVKLGNVLFGDWKDVAPLLEGLVENQDYVVEQDARNSAVPLLDKRAINARIEPGAIIRDQVEIGDNAVIMMGAVINIGAEIGAGTMIDMGAILGGRAIVGKNSHVGAGAVLAGVIEPASAEPVRVGDNVLIGANAVVIEGVQIGSGSVVAAGAIVTQDVPENVVVAGVPARIIKEIDAQTQQKTALEDALRTL.

It belongs to the transferase hexapeptide repeat family. DapH subfamily.

It catalyses the reaction (S)-2,3,4,5-tetrahydrodipicolinate + acetyl-CoA + H2O = L-2-acetamido-6-oxoheptanedioate + CoA. Its pathway is amino-acid biosynthesis; L-lysine biosynthesis via DAP pathway; LL-2,6-diaminopimelate from (S)-tetrahydrodipicolinate (acetylase route): step 1/3. In terms of biological role, catalyzes the transfer of an acetyl group from acetyl-CoA to tetrahydrodipicolinate. In Streptococcus pneumoniae (strain CGSP14), this protein is 2,3,4,5-tetrahydropyridine-2,6-dicarboxylate N-acetyltransferase.